A 287-amino-acid polypeptide reads, in one-letter code: Oxaloacetate decarboxylase (287 aa).

Residue serine 50 coordinates substrate. Aspartate 88 is a Mg(2+) binding site. Substrate-binding residues include arginine 159 and histidine 235.

Belongs to the isocitrate lyase/PEP mutase superfamily. Oxaloacetate decarboxylase family. In terms of assembly, homotetramer; dimer of dimers. Mg(2+) is required as a cofactor.

It catalyses the reaction oxaloacetate + H(+) = pyruvate + CO2. In terms of biological role, catalyzes the decarboxylation of oxaloacetate into pyruvate. Seems to play a role in maintaining cellular concentrations of bicarbonate and pyruvate. The chain is Oxaloacetate decarboxylase from Chromohalobacter salexigens (strain ATCC BAA-138 / DSM 3043 / CIP 106854 / NCIMB 13768 / 1H11).